The following is a 276-amino-acid chain: 28 kDa ribonucleoprotein, chloroplastic (276 aa).

The transit peptide at methionine 1–serine 57 directs the protein to the chloroplast. 2 RRM domains span residues alanine 97–proline 175 and tyrosine 191–glutamate 269.

It is found in the plastid. The protein localises to the chloroplast. Functionally, probably involved in the 3'-end processing of chloroplast mRNA's. The polypeptide is 28 kDa ribonucleoprotein, chloroplastic (Nicotiana sylvestris (Wood tobacco)).